Here is a 138-residue protein sequence, read N- to C-terminus: Nucleoside diphosphate kinase (138 aa).

6 residues coordinate ATP: lysine 9, phenylalanine 57, arginine 85, threonine 91, arginine 102, and asparagine 112. The Pros-phosphohistidine intermediate role is filled by histidine 115.

The protein belongs to the NDK family. As to quaternary structure, homotetramer. Mg(2+) is required as a cofactor.

The protein resides in the cytoplasm. It catalyses the reaction a 2'-deoxyribonucleoside 5'-diphosphate + ATP = a 2'-deoxyribonucleoside 5'-triphosphate + ADP. The enzyme catalyses a ribonucleoside 5'-diphosphate + ATP = a ribonucleoside 5'-triphosphate + ADP. Its function is as follows. Major role in the synthesis of nucleoside triphosphates other than ATP. The ATP gamma phosphate is transferred to the NDP beta phosphate via a ping-pong mechanism, using a phosphorylated active-site intermediate. The protein is Nucleoside diphosphate kinase of Deinococcus radiodurans (strain ATCC 13939 / DSM 20539 / JCM 16871 / CCUG 27074 / LMG 4051 / NBRC 15346 / NCIMB 9279 / VKM B-1422 / R1).